The chain runs to 160 residues: Dihydrofolate reductase (160 aa).

The DHFR domain occupies 2 to 159; that stretch reads TFSLIVATTL…YDCRFLILTR (158 aa). A substrate-binding site is contributed by isoleucine 6. Residues alanine 8 and 14 to 20 each bind NADP(+); that span reads VIGKDNQ. Aspartate 28 lines the substrate pocket. 46 to 47 contributes to the NADP(+) binding site; the sequence is KT. Residues arginine 53 and arginine 58 each coordinate substrate. NADP(+) contacts are provided by residues 64-65 and 96-103; these read SR and GGGELFKQ. A substrate-binding site is contributed by threonine 114.

It belongs to the dihydrofolate reductase family.

The enzyme catalyses (6S)-5,6,7,8-tetrahydrofolate + NADP(+) = 7,8-dihydrofolate + NADPH + H(+). It functions in the pathway cofactor biosynthesis; tetrahydrofolate biosynthesis; 5,6,7,8-tetrahydrofolate from 7,8-dihydrofolate: step 1/1. Its function is as follows. Key enzyme in folate metabolism. Catalyzes an essential reaction for de novo glycine and purine synthesis, and for DNA precursor synthesis. The chain is Dihydrofolate reductase (folA) from Haemophilus influenzae (strain ATCC 51907 / DSM 11121 / KW20 / Rd).